The chain runs to 72 residues: Large ribosomal subunit protein uL29 (72 aa).

This sequence belongs to the universal ribosomal protein uL29 family.

This chain is Large ribosomal subunit protein uL29, found in Prochlorococcus marinus subsp. pastoris (strain CCMP1986 / NIES-2087 / MED4).